The sequence spans 85 residues: Large ribosomal subunit protein bL27 (85 aa).

Residues 1–21 (MAHKKAGGSSRNGRDSEGRRL) form a disordered region.

It belongs to the bacterial ribosomal protein bL27 family.

This is Large ribosomal subunit protein bL27 from Rhodospirillum rubrum (strain ATCC 11170 / ATH 1.1.1 / DSM 467 / LMG 4362 / NCIMB 8255 / S1).